The sequence spans 1184 residues: Probable phospholipid-transporting ATPase 12 (1184 aa).

Over 1-75 (MATVSGRRRK…TTKYTLATFL (75 aa)) the chain is Cytoplasmic. The helical transmembrane segment at 76 to 97 (PKSLFEQFRRVANFYFLVVGIL) threads the bilayer. The Extracellular segment spans residues 98–101 (SFTP). A helical membrane pass occupies residues 102 to 124 (LAPYTAVSAIVPLTFVILATMFK). Residues 125-306 (EGVEDWRRKQ…SMIERKMDKI (182 aa)) are Cytoplasmic-facing. A helical membrane pass occupies residues 307–328 (IYLMFLMVFSLAFFGSVLFGIW). The Extracellular portion of the chain corresponds to 329-364 (TRDDFQNGVMERWYLKPDDSSIFFDPKRAPMAAIYH). The helical transmembrane segment at 365–382 (FLTALMLNSYFIPISLYV) threads the bilayer. At 383–921 (SIEIVKVLQS…HGHWCYRRIS (539 aa)) the chain is on the cytoplasmic side. Asp430 functions as the 4-aspartylphosphate intermediate in the catalytic mechanism. Asp866 and Asp870 together coordinate Mg(2+). A helical transmembrane segment spans residues 922 to 941 (KMICYFFYKNITFGFTLFLY). At 942 to 955 (EAYTSFSATPAYND) the chain is on the extracellular side. The helical transmembrane segment at 956-975 (WYLSLYSVFFTSLPVICLGI) threads the bilayer. Residues 976–1005 (FDQDVSAPFCLKFPVLYQEGVQNLLFSWRR) are Cytoplasmic-facing. The chain crosses the membrane as a helical span at residues 1006-1028 (ILSWMFHGFCSAIIIFFLCKTSL). Topologically, residues 1029–1041 (ESQAFNHEGKTAG) are extracellular. A helical transmembrane segment spans residues 1042-1064 (RDILGGTMYTCVVWVVSLQMVLT). Residues 1065 to 1070 (ISYFTL) lie on the Cytoplasmic side of the membrane. The chain crosses the membrane as a helical span at residues 1071 to 1091 (IQHVVVWGSVVIWYLFLMVYG). At 1092–1108 (SLPIRMSTDAYMVFLEA) the chain is on the extracellular side. A helical membrane pass occupies residues 1109-1133 (LAPAPSYWITTLFVVLSTMMPYFIF). Residues 1134-1184 (SAIQMRFFPMSHGTVQLLRYEDQCSNSGNFEMGRQGSVRPTLVMRSHQPES) are Cytoplasmic-facing.

Belongs to the cation transport ATPase (P-type) (TC 3.A.3) family. Type IV subfamily.

The protein localises to the membrane. It catalyses the reaction ATP + H2O + phospholipidSide 1 = ADP + phosphate + phospholipidSide 2.. Involved in transport of phospholipids. This Arabidopsis thaliana (Mouse-ear cress) protein is Probable phospholipid-transporting ATPase 12.